We begin with the raw amino-acid sequence, 204 residues long: Ribonuclease HII (204 aa).

Residues 8-197 (RLICGVDEAG…VRELLQNPPL (190 aa)) enclose the RNase H type-2 domain. Positions 14, 15, and 106 each coordinate a divalent metal cation.

The protein belongs to the RNase HII family. Requires Mn(2+) as cofactor. Mg(2+) is required as a cofactor.

It localises to the cytoplasm. The catalysed reaction is Endonucleolytic cleavage to 5'-phosphomonoester.. Functionally, endonuclease that specifically degrades the RNA of RNA-DNA hybrids. The chain is Ribonuclease HII from Azoarcus sp. (strain BH72).